The chain runs to 145 residues: Protein BUD31 homolog 3 (145 aa).

Belongs to the BUD31 (G10) family.

The protein resides in the nucleus. The protein is Protein BUD31 homolog 3 of Oryza sativa subsp. japonica (Rice).